Reading from the N-terminus, the 72-residue chain is uncharacterized protein (72 aa).

The protein resides in the plastid. It localises to the chloroplast. This is an uncharacterized protein from Oenothera berteroana (Bertero's evening primrose).